A 38-amino-acid chain; its full sequence is 4 kDa defensin (38 aa).

3 disulfide bridges follow: C4–C25, C11–C33, and C15–C35.

Belongs to the invertebrate defensin family. Type 2 subfamily.

The protein resides in the secreted. In terms of biological role, dual-function peptide with antimicrobial and potassium channel-blocking activities. Shows inhibitory activity against Gram-positive bacteria such as M.luteus, S.aureus, B.subtilis, and M.luteus as well as methicillin-resistant S.aureus (MIC=0.1-20 uM). Does not act on bacteria by disrupting membranes. Also moderately inhibits Kv1.1/KCNA1, Kv1.2/KCNA2, and Kv1.3/KCNA3 potassium channels. Inhibits potassium channels by interacting with the pore region. Does not show hemolytic activity. The sequence is that of 4 kDa defensin from Leiurus hebraeus (Hebrew deathstalker scorpion).